Here is an 846-residue protein sequence, read N- to C-terminus: Translation initiation factor IF-2 (846 aa).

A disordered region spans residues 198–219 (YKREEEEKKSKAKKAGGKGFKK). Over residues 207–219 (SKAKKAGGKGFKK) the composition is skewed to basic residues. Residues 345–512 (SRAPVVTIMG…AVLLQSEVLE (168 aa)) form the tr-type G domain. Residues 354 to 361 (GHVDHGKT) form a G1 region. 354 to 361 (GHVDHGKT) lines the GTP pocket. A G2 region spans residues 379-383 (GITQH). Positions 400 to 403 (DTPG) are G3. GTP is bound by residues 400 to 404 (DTPGH) and 454 to 457 (NKID). The G4 stretch occupies residues 454–457 (NKID). Positions 490-492 (SAK) are G5.

It belongs to the TRAFAC class translation factor GTPase superfamily. Classic translation factor GTPase family. IF-2 subfamily.

The protein resides in the cytoplasm. One of the essential components for the initiation of protein synthesis. Protects formylmethionyl-tRNA from spontaneous hydrolysis and promotes its binding to the 30S ribosomal subunits. Also involved in the hydrolysis of GTP during the formation of the 70S ribosomal complex. In Francisella tularensis subsp. novicida (strain U112), this protein is Translation initiation factor IF-2.